Consider the following 572-residue polypeptide: Urease subunit alpha (572 aa).

Residues histidine 139, histidine 141, and lysine 222 each contribute to the Ni(2+) site. Position 222 is an N6-carboxylysine (lysine 222). Histidine 224 is a substrate binding site. Ni(2+) is bound by residues histidine 251 and histidine 277. Histidine 325 serves as the catalytic Proton donor. Aspartate 365 lines the Ni(2+) pocket.

This sequence belongs to the metallo-dependent hydrolases superfamily. Urease alpha subunit family. As to quaternary structure, heterotrimer of UreA (gamma), UreB (beta) and UreC (alpha) subunits. Three heterotrimers associate to form the active enzyme. Ni cation serves as cofactor. Carboxylation allows a single lysine to coordinate two nickel ions.

The protein localises to the cytoplasm. The catalysed reaction is urea + 2 H2O + H(+) = hydrogencarbonate + 2 NH4(+). Its pathway is nitrogen metabolism; urea degradation; CO(2) and NH(3) from urea (urease route): step 1/1. The chain is Urease subunit alpha from Acetivibrio thermocellus (strain ATCC 27405 / DSM 1237 / JCM 9322 / NBRC 103400 / NCIMB 10682 / NRRL B-4536 / VPI 7372) (Clostridium thermocellum).